We begin with the raw amino-acid sequence, 125 residues long: Large ribosomal subunit protein bL12 (125 aa).

Belongs to the bacterial ribosomal protein bL12 family. In terms of assembly, homodimer. Part of the ribosomal stalk of the 50S ribosomal subunit. Forms a multimeric L10(L12)X complex, where L10 forms an elongated spine to which 2 to 4 L12 dimers bind in a sequential fashion. Binds GTP-bound translation factors.

Its function is as follows. Forms part of the ribosomal stalk which helps the ribosome interact with GTP-bound translation factors. Is thus essential for accurate translation. The protein is Large ribosomal subunit protein bL12 of Erythrobacter litoralis (strain HTCC2594).